We begin with the raw amino-acid sequence, 503 residues long: MFYTVIWIFCATLLAILFGGVRKPKRFPPGPAWYPIVGSALQVSQLRCRLGMFCKVIDVFARQYVNPYGFYGLKIGKDKVVIAYTNDAISEMMTNEDIDGRPDGIFYRLRTFNSRLGVLLTDGEMWVEQRRFILRHLKNFGFARSGMMDIVHNEATCLLQDLKDKVLKSGGKQTRIEMHDLTSVYVLNTLWCMLSGRRYEPGSPEITQLLETFFELFKNIDMVGALFSHFPLLRFIAPNFSGYNGFVESHRSLYTFMSKEIELHRLTYKNYDEPRDLMDSYLRAQDEGNDEKGMFSDQSLLAICLDMFLAGSETTNKSLGFCFMHLVLQPEIQERAFQEIKEVVGLERIPEWSRDRTKLPYCEAITLEAVRMFMLHTFGIPHRAVCDTRLSGYEIPKDTMVIACFRGMLINPVDFPDPESFNPDRYLFDGHLKLPEAFNPFGFGRHRCMGDLLGRQNLFMFTTTVLQNFKMVAIPGQVPEEVPLEGATAAVKPYDIMLVAREQ.

Heme is bound at residue Cys448.

This sequence belongs to the cytochrome P450 family. Heme serves as cofactor.

It is found in the endoplasmic reticulum membrane. The protein localises to the microsome membrane. Functionally, may be involved in the metabolism of insect hormones and in the breakdown of synthetic insecticides. This Drosophila melanogaster (Fruit fly) protein is Probable cytochrome P450 303a1 (Cyp303a1).